A 54-amino-acid polypeptide reads, in one-letter code: UPF0391 membrane protein Pmen_0080 (54 aa).

Helical transmembrane passes span 4–24 and 28–48; these read WALT…GGIA and AGIA…SFIM.

It belongs to the UPF0391 family.

It is found in the cell membrane. The chain is UPF0391 membrane protein Pmen_0080 from Ectopseudomonas mendocina (strain ymp) (Pseudomonas mendocina).